The primary structure comprises 416 residues: RNA polymerase sigma factor SigA (416 aa).

The interval 184 to 254 (MVQSNLRLVV…TRAIADQSRT (71 aa)) is sigma-70 factor domain-2. An Interaction with polymerase core subunit RpoC motif is present at residues 208-211 (DLIQ). The sigma-70 factor domain-3 stretch occupies residues 263 to 338 (ETISRIKKTT…EADGETPEDE (76 aa)). Residues 351-404 (VLDTLSPRERDVLRLRYGLDDGRMKTLEEIGQIFNVTRERIRQIEAKALRKLRH) form a sigma-70 factor domain-4 region. Residues 377–396 (LEEIGQIFNVTRERIRQIEA) constitute a DNA-binding region (H-T-H motif).

The protein belongs to the sigma-70 factor family. RpoD/SigA subfamily. As to quaternary structure, interacts transiently with the RNA polymerase catalytic core.

The protein localises to the cytoplasm. Functionally, sigma factors are initiation factors that promote the attachment of RNA polymerase to specific initiation sites and are then released. This sigma factor is the primary sigma factor during exponential growth. The chain is RNA polymerase sigma factor SigA from Microcystis aeruginosa.